Consider the following 785-residue polypeptide: MGRLRLAFLAISLVVFVCVSEEIFSRGGLNLLRFSVYGEDVAEQTWIHQNPRRKLISYPKKFSVSAPNLAFGPAPSFAPGPGPSFAPGPAPNPRSYDWLAPASSPNEPPAETPDESSPSPSEETPSVVAPSQSVPGPPRPPPQREKKDDILMKLIIAVASTAVLTFVFVALMFLCCFKRNCNNAVGSRDGPRDEGPLLRLSTGSTENSPTVASTSRKMFSVASSKKRSFLSRVSLKRNGHEFSTAESSSAAGLPPLKLPPGRSAPPPPPAAAPPPQPPPPPPPKPQPPPPPKIARPPPAPPKGAAPKRQGNTSSGDASDVDSETGAPKTKLKPFFWDKMANPDQKMVWHEISAGSFQFNEEAMESLFGYNDGNKNKNGQKSTDSSLRESPLQYIQIIDTRKAQNLSILLRALNVTTEEVVDAIKEGNELPVELLQTLLKMAPTSEEELKLRLYSGDLHLLGPAERFLKILVDIPFAFKRIESLLFMISLQEEVSGLKEALGTLEVACKKLRNSRLFLKLLEAVLKTGNRMNVGTFRGDAQAFKLDTLLKLSDVKGTDGKTTLLHFVVLEIIRSEGVRALRLQSRSFSSVKTDDSNADSSPQSVERYRSTGLQVVTGLTTELEDVKRAAIIDADGLAATLANISGSLTNAREFLKTMDEESDFERALAGFIERADADFKWLKEEEERIMVLVKSSADYFHGKSAKNEGLRLFAIVRDFLIMLEKVCREVKETTKTTNHSGKKESEMTTSDSNQPSPDFRQRLFPAIAERRMDSSDDSDDEEDSSPS.

An N-terminal signal peptide occupies residues 1–20 (MGRLRLAFLAISLVVFVCVS). Residues 96–145 (YDWLAPASSPNEPPAETPDESSPSPSEETPSVVAPSQSVPGPPRPPPQRE) are disordered. Over residues 115–134 (ESSPSPSEETPSVVAPSQSV) the composition is skewed to low complexity. Residues 154–174 (LIIAVASTAVLTFVFVALMFL) traverse the membrane as a helical segment. Disordered stretches follow at residues 184 to 228 (AVGS…KKRS), 241 to 329 (EFST…APKT), and 730 to 785 (ETTK…SSPS). The span at 201-223 (STGSTENSPTVASTSRKMFSVAS) shows a compositional bias: polar residues. The span at 256-303 (LKLPPGRSAPPPPPAAAPPPQPPPPPPPKPQPPPPPKIARPPPAPPKG) shows a compositional bias: pro residues. The 427-residue stretch at 321–747 (DSETGAPKTK…SGKKESEMTT (427 aa)) folds into the FH2 domain. Residues 745–754 (MTTSDSNQPS) are compositionally biased toward polar residues. Positions 773–785 (SDDSDDEEDSSPS) are enriched in acidic residues.

The protein belongs to the formin-like family. Class-I subfamily.

It localises to the membrane. In terms of biological role, acts as actin nucleation factor that directs the formation of actin cables and polarized growth in pollen tubes. The sequence is that of Formin-like protein 3 (FH3) from Arabidopsis thaliana (Mouse-ear cress).